A 142-amino-acid chain; its full sequence is Peptide methionine sulfoxide reductase MsrB (142 aa).

Positions Glu-13 to Glu-135 constitute a MsrB domain. Residues Cys-52, Cys-55, Cys-101, and Cys-104 each coordinate Zn(2+). Cys-124 acts as the Nucleophile in catalysis.

This sequence belongs to the MsrB Met sulfoxide reductase family. Zn(2+) serves as cofactor.

The catalysed reaction is L-methionyl-[protein] + [thioredoxin]-disulfide + H2O = L-methionyl-(R)-S-oxide-[protein] + [thioredoxin]-dithiol. The sequence is that of Peptide methionine sulfoxide reductase MsrB from Alteromonas mediterranea (strain DSM 17117 / CIP 110805 / LMG 28347 / Deep ecotype).